A 92-amino-acid chain; its full sequence is Arrestin-C (92 aa).

Belongs to the arrestin family. As to quaternary structure, homodimer; disulfide-linked in response to retinal illumination. Interacts with CXCR4; the interaction is dependent on the C-terminal phosphorylation of CXCR4 and modulates the calcium ion mobilization activity of CXCR4. Interacts with GPR84. As to expression, retina and pineal gland.

It is found in the photoreceptor inner segment. The protein localises to the cell projection. The protein resides in the cilium. It localises to the photoreceptor outer segment. May play a role in an as yet undefined retina-specific signal transduction. Could bind to photoactivated-phosphorylated red/green opsins. The sequence is that of Arrestin-C (Arr3) from Rattus norvegicus (Rat).